Consider the following 825-residue polypeptide: METLTSRHEKRALHSQASAISQDREEKIMSQEPLSFKDVAVVFTEEELELLDSTQRQLYQDVMQENFRNLLSVGERNPLGDKNGKDTEYIQDEELRFFSHKELSSCKIWEEVAGELPGSQDCRVNLQGKDFQFSEDAAPHQGWEGASTPCFPIENFLDSLQGDGLIGLENQQFPAWRAIRPIPIQGSWAKAFVNQLGDVQERCKNLDTEDTVYKCNWDDDSFCWISCHVDHRFPEIDKPCGCNKCRKDCIKNSVLHRINPGENGLKSNEYRNGFRDDADLPPHPRVPLKEKLCQYDEFSEGLRHSAHLNRHQRVPTGEKSVKSLERGRGVRQNTHIRNHPRAPVGDMPYRCDVCGKGFRYKSVLLIHQGVHTGRRPYKCEECGKAFGRSSNLLVHQRVHTGEKPYKCSECGKGFSYSSVLQVHQRLHTGEKPYTCSECGKGFCAKSALHKHQHIHPGEKPYSCGECGKGFSCSSHLSSHQKTHTGERPYQCDKCGKGFSHNSYLQAHQRVHMGQHLYKCNVCGKSFSYSSGLLMHQRLHTGEKPYKCECGKSFGRSSDLHIHQRVHTGEKPYKCSECGKGFRRNSDLHSHQRVHTGERPYVCDVCGKGFIYSSDLLIHQRVHTGEKPYKCAECGKGFSYSSGLLIHQRVHTGEKPYRCQECGKGFRCTSSLHKHQRVHTGKKPYTCDQCGKGFSYGSNLRTHQRLHTGEKPYTCCECGKGFRYGSGLLSHKRVHTGEKPYRCHVCGKGYSQSSHLQGHQRVHTGEKPYKCEECGKGFGRNSCLHVHQRVHTGEKPYTCGVCGKGFSYTSGLRNHQRVHLGENPYK.

Residues 1-26 form a disordered region; it reads METLTSRHEKRALHSQASAISQDREE. Positions 34-108 constitute a KRAB domain; the sequence is LSFKDVAVVF…SHKELSSCKI (75 aa). Residues 291–315 form a C2H2-type 1; degenerate zinc finger; it reads KLCQYDEFSEGLRHSAHLNRHQRVP. C2H2-type zinc fingers lie at residues 349–371, 377–399, 405–427, 433–455, 461–483, 489–511, and 517–539; these read YRCD…QGVH, YKCE…QRVH, YKCS…QRLH, YTCS…QHIH, YSCG…QKTH, YQCD…QRVH, and YKCN…QRLH. Lys543 is covalently cross-linked (Glycyl lysine isopeptide (Lys-Gly) (interchain with G-Cter in SUMO2)). C2H2-type zinc fingers lie at residues 545 to 566, 572 to 594, 600 to 622, 628 to 650, 656 to 678, 684 to 706, 712 to 734, 740 to 762, 768 to 790, and 796 to 818; these read YKCE…QRVH, YKCS…QRVH, YVCD…QRVH, YKCA…QRVH, YRCQ…QRVH, YTCD…QRLH, YTCC…KRVH, YRCH…QRVH, and YTCG…QRVH.

Belongs to the krueppel C2H2-type zinc-finger protein family.

It is found in the nucleus. In terms of biological role, may be involved in transcriptional regulation. The protein is Zinc finger protein 229 of Homo sapiens (Human).